A 484-amino-acid polypeptide reads, in one-letter code: Glycogen synthase (484 aa).

ADP-alpha-D-glucose is bound at residue Lys-15.

Belongs to the glycosyltransferase 1 family. Bacterial/plant glycogen synthase subfamily.

The enzyme catalyses [(1-&gt;4)-alpha-D-glucosyl](n) + ADP-alpha-D-glucose = [(1-&gt;4)-alpha-D-glucosyl](n+1) + ADP + H(+). Its pathway is glycan biosynthesis; glycogen biosynthesis. In terms of biological role, synthesizes alpha-1,4-glucan chains using ADP-glucose. In Bacillus licheniformis (strain ATCC 14580 / DSM 13 / JCM 2505 / CCUG 7422 / NBRC 12200 / NCIMB 9375 / NCTC 10341 / NRRL NRS-1264 / Gibson 46), this protein is Glycogen synthase.